A 183-amino-acid polypeptide reads, in one-letter code: Large ribosomal subunit protein mL43 (183 aa).

Disordered regions lie at residues 120-144 and 162-183; these read HTDNPSIQGQWTPSPTNGLPSTGCG and PGALDRERDRIGSSFGFQAQAE. Positions 122–139 are enriched in polar residues; sequence DNPSIQGQWTPSPTNGLP. Basic and acidic residues predominate over residues 162–172; the sequence is PGALDRERDRI.

It belongs to the mitochondrion-specific ribosomal protein mL43 family. Component of the mitochondrial ribosome large subunit (39S) which comprises a 16S rRNA and about 50 distinct proteins. Ubiquitous with the highest levels in the liver, heart and kidneys. The skeletal muscle, brain and testis showed lower but detectable expression. Expression is coregulated with TWNK.

It localises to the mitochondrion. This chain is Large ribosomal subunit protein mL43 (Mrpl43), found in Mus musculus (Mouse).